A 301-amino-acid polypeptide reads, in one-letter code: Small ribosomal subunit protein uS2 (301 aa).

This sequence belongs to the universal ribosomal protein uS2 family. As to quaternary structure, component of the small ribosomal subunit. Mature ribosomes consist of a small (40S) and a large (60S) subunit. The 40S subunit contains about 33 different proteins and 1 molecule of RNA (18S). The 60S subunit contains about 49 different proteins and 3 molecules of RNA (25S, 5.8S and 5S). Interacts with RPS21.

It is found in the cytoplasm. Required for the assembly and/or stability of the 40S ribosomal subunit. Required for the processing of the 20S rRNA-precursor to mature 18S rRNA in a late step of the maturation of 40S ribosomal subunits. This Ajellomyces dermatitidis (strain ER-3 / ATCC MYA-2586) (Blastomyces dermatitidis) protein is Small ribosomal subunit protein uS2.